Consider the following 124-residue polypeptide: Small ribosomal subunit protein uS12 (124 aa).

At aspartate 89 the chain carries 3-methylthioaspartic acid.

Belongs to the universal ribosomal protein uS12 family. Part of the 30S ribosomal subunit. Contacts proteins S8 and S17. May interact with IF1 in the 30S initiation complex.

With S4 and S5 plays an important role in translational accuracy. In terms of biological role, interacts with and stabilizes bases of the 16S rRNA that are involved in tRNA selection in the A site and with the mRNA backbone. Located at the interface of the 30S and 50S subunits, it traverses the body of the 30S subunit contacting proteins on the other side and probably holding the rRNA structure together. The combined cluster of proteins S8, S12 and S17 appears to hold together the shoulder and platform of the 30S subunit. In Serratia proteamaculans (strain 568), this protein is Small ribosomal subunit protein uS12.